The chain runs to 408 residues: 5-hydroxytryptamine receptor 1A (408 aa).

Residues 1–32 lie on the Extracellular side of the membrane; it reads MDASNNTTSWNILQRGRMGPSWRRCPVSYQII. N-linked (GlcNAc...) asparagine glycans are attached at residues asparagine 5 and asparagine 6. The chain crosses the membrane as a helical span at residues 33 to 53; the sequence is ASLFLGRSFSAGIFGNACVIA. Topologically, residues 54 to 67 are cytoplasmic; it reads AIALERSLQNVANY. Residues 68–92 form a helical membrane-spanning segment; that stretch reads LIGSLAVTDLMVSVLVLPMAAQNQV. Residues 93–101 lie on the Extracellular side of the membrane; that stretch reads LNKWTLGQV. The chain crosses the membrane as a helical span at residues 102 to 126; sequence TCDIFISLDVLCCTSSILHLCAIAL. A disulfide bridge connects residues cysteine 103 and cysteine 181. Residues aspartate 110 and cysteine 114 each coordinate serotonin. Residues 127–129 carry the DRY motif; important for ligand-induced conformation changes motif; it reads DRY. Residues 127-146 lie on the Cytoplasmic side of the membrane; it reads DRYWAITDPIDYVNKRTPRR. A helical transmembrane segment spans residues 147 to 168; the sequence is AAVLISITWIVGFSISIPPMLG. Topologically, residues 169 to 187 are extracellular; sequence WRTPEDRSDPNACRISEDP. A helical membrane pass occupies residues 188-210; the sequence is GYTIYSTFGAFYIPLILMLVLYG. Residues 211–333 are Cytoplasmic-facing; sequence KIFKAARFRI…LARERKTVKT (123 aa). The interval 235–255 is disordered; that stretch reads TCLSVSQQSPKEKQRGAQQEL. Residues lysine 332, threonine 333, and glycine 339 each coordinate 1D-myo-inositol 4-phosphate. Residues 334-357 form a helical membrane-spanning segment; that stretch reads LGIIMGTFILCWLPFFIVALVLPF. The Extracellular segment spans residues 358-364; it reads CETCHMP. A helical transmembrane segment spans residues 365–389; it reads HLLFDIITWLGYSNSLLNPIIYAYF. Positions 382–386 match the NPxxY motif; important for ligand-induced conformation changes and signaling motif; sequence NPIIY. 3 residues coordinate 1D-myo-inositol 4-phosphate: phenylalanine 389, asparagine 390, and lysine 391. Residues 390–408 lie on the Cytoplasmic side of the membrane; that stretch reads NKDFQSAFKKIIKCKFCRQ.

This sequence belongs to the G-protein coupled receptor 1 family. 5-hydroxytryptamine receptor subfamily. HTR1A sub-subfamily. As to expression, first expressed in the rostral part of the brain stem at stage 22. At later stages of development, expression is localized to serotonergic neurons. The expression pattern changes in the tadpole of stage 41 where, in addition to serotonergic neurons, expression is also localized to the inner nuclear layer (INL) of the developing retina. This expression pattern continues through to the start of metamorphosis (stage 46). In adults, expressed in the brain, in particular the telencephalon, diencephalon and mesencephalon. In the telencephalic region, expression is localized to the lateral, dorsal and medial pallium, and in the striatum, septum and amygdala. In the mesencephalic region, expression is strongest in the optic tectum and torus semicircularis with moderate levels of expression in tegmental nuclei. In diencephalon, localized to the dorsal and ventral thalamus and the preoptic area of the hypothalamus.

It is found in the cell membrane. Its activity is regulated as follows. G-protein coupled receptor activity is regulated by lipids: phosphatidylinositol 4-phosphate increases HTR1A-mediated activity. Its function is as follows. G-protein coupled receptor for 5-hydroxytryptamine (serotonin). Also functions as a receptor for various drugs and psychoactive substances. Ligand binding causes a conformation change that triggers signaling via guanine nucleotide-binding proteins (G proteins) and modulates the activity of downstream effectors, such as adenylate cyclase. HTR1A is coupled to G(i)/G(o) G alpha proteins and mediates inhibitory neurotransmission: signaling inhibits adenylate cyclase activity and activates a phosphatidylinositol-calcium second messenger system that regulates the release of Ca(2+) ions from intracellular stores. Beta-arrestin family members regulate signaling by mediating both receptor desensitization and resensitization processes. Activation of the receptor may play a role in the exit from G0 phase and in promoting DNA synthesis. This is 5-hydroxytryptamine receptor 1A from Xenopus laevis (African clawed frog).